The primary structure comprises 417 residues: MFQCLEPERNEEAGLVYVREKGKLSVIGSHSSELRTRPCRLFSKGFSVELCGKQEDTSKHRQKPFIFTYTKEGSLRYSAKSLFTLTLELISDNIQYVDSLMGFPDQIAEKLFTAAEAKQKFYAPCSGLMALRKFTEAYGDLVLSSLCLRGRYLLVSERLEEIKSFQCLHSLDLSCCKLGDEHELLAHLSSDPMSSLTELYLKDNCLSNIGIQKMTASVRVLGRGLDKLKVLDLSSNPGITDRGVCFLFGFKLLKFLDLSDTSIQDPSGTLKKIETKIGLVLSKKSIFQFDHTNCRTQGWAEQLLEQWESYILSAIKPKDTLKSRNAAQQFYGKEKKQIPSDSGTFTLPAPVVQKQTHLQFFRPKEQKDPDSSNSEKRRHSTKRTGADCVQEDCSIAPSTKRPRVTLTSSDWDLLNSY.

LRR repeat units lie at residues 167-188, 195-215, 227-248, and 252-273; these read CLHSLDLSCCKLGDEHELLAHL, SLTELYLKDNCLSNIGIQKMT, KLKVLDLSSNPGITDRGVCFLF, and LLKFLDLSDTSIQDPSGTLKKI. The tract at residues 360-390 is disordered; the sequence is FFRPKEQKDPDSSNSEKRRHSTKRTGADCVQ. Positions 362–375 are enriched in basic and acidic residues; sequence RPKEQKDPDSSNSE.

The protein belongs to the LRRC42 family.

This Xenopus laevis (African clawed frog) protein is Leucine-rich repeat-containing protein 42 (lrrc42).